A 616-amino-acid chain; its full sequence is Protein translocase subunit SecD (616 aa).

Helical transmembrane passes span 11–31, 453–473, 475–495, 497–517, 547–569, and 585–605; these read LMVI…IYGE, QGIN…LFYY, MFGV…VGLM, ILPG…TLGM, YNGA…IILY, and LGVA…VNAL.

It belongs to the SecD/SecF family. SecD subfamily. Forms a complex with SecF. Part of the essential Sec protein translocation apparatus which comprises SecA, SecYEG and auxiliary proteins SecDF-YajC and YidC.

The protein localises to the cell inner membrane. In terms of biological role, part of the Sec protein translocase complex. Interacts with the SecYEG preprotein conducting channel. SecDF uses the proton motive force (PMF) to complete protein translocation after the ATP-dependent function of SecA. In Haemophilus influenzae (strain ATCC 51907 / DSM 11121 / KW20 / Rd), this protein is Protein translocase subunit SecD.